The primary structure comprises 660 residues: DNA polymerase alpha-associated DNA helicase A (660 aa).

232–239 (GPPGTGKT) contributes to the ATP binding site.

Belongs to the DNA2/NAM7 helicase family. In terms of assembly, associates with the hexameric DNA polymerase alpha.

The protein localises to the cytoplasm. It localises to the nucleus. The catalysed reaction is ATP + H2O = ADP + phosphate + H(+). In terms of biological role, DNA polymerase alpha-associated DNA helicase which may be involved in DNA replication. The chain is DNA polymerase alpha-associated DNA helicase A (hcs1) from Schizosaccharomyces pombe (strain 972 / ATCC 24843) (Fission yeast).